We begin with the raw amino-acid sequence, 417 residues long: Putative competence-damage inducible protein (417 aa).

It belongs to the CinA family.

The protein is Putative competence-damage inducible protein of Leuconostoc citreum (strain KM20).